The following is a 217-amino-acid chain: Probable transaldolase (217 aa).

Lys83 functions as the Schiff-base intermediate with substrate in the catalytic mechanism.

It belongs to the transaldolase family. Type 3B subfamily.

Its subcellular location is the cytoplasm. It carries out the reaction D-sedoheptulose 7-phosphate + D-glyceraldehyde 3-phosphate = D-erythrose 4-phosphate + beta-D-fructose 6-phosphate. The protein operates within carbohydrate degradation; pentose phosphate pathway; D-glyceraldehyde 3-phosphate and beta-D-fructose 6-phosphate from D-ribose 5-phosphate and D-xylulose 5-phosphate (non-oxidative stage): step 2/3. Functionally, transaldolase is important for the balance of metabolites in the pentose-phosphate pathway. The sequence is that of Probable transaldolase from Clostridium botulinum (strain Loch Maree / Type A3).